We begin with the raw amino-acid sequence, 667 residues long: Leucine zipper putative tumor suppressor 2 (667 aa).

Residues methionine 1–alanine 25 are compositionally biased toward low complexity. Disordered regions lie at residues methionine 1–glycine 132, proline 150–leucine 325, and glutamine 516–proline 541. The segment at methionine 1–lysine 333 is required for centrosomal localization. Positions proline 172–glutamine 181 are enriched in polar residues. Positions alanine 187–alanine 198 are enriched in low complexity. The span at proline 212–threonine 232 shows a compositional bias: polar residues. The span at serine 241 to glycine 282 shows a compositional bias: low complexity. Phosphoserine is present on serine 248. Gly residues predominate over residues serine 283 to glycine 294. Position 295 is a phosphoserine (serine 295). Residues serine 310–serine 321 show a composition bias toward pro residues. A coiled-coil region spans residues valine 329–aspartate 647. Residues serine 445–isoleucine 667 form a sufficient for interaction with CTNNB1 region. Residues isoleucine 448–isoleucine 667 form a sufficient for interaction with KATNB1 and for inhibition of katanin-mediated microtubule severing region. Over residues glutamine 516–glycine 526 the composition is skewed to basic and acidic residues. Position 568 is a phosphoserine (serine 568). The short motif at leucine 629–leucine 638 is the Nuclear export signal element.

The protein belongs to the LZTS2 family. As to quaternary structure, interacts with KATNB1. Also interacts with CTNNB1, gamma-tubulin and KIF23.

The protein localises to the cytoplasm. It localises to the cytoskeleton. Its subcellular location is the microtubule organizing center. The protein resides in the centrosome. Negative regulator of katanin-mediated microtubule severing and release from the centrosome. Required for central spindle formation and the completion of cytokinesis. May negatively regulate axonal outgrowth by preventing the formation of microtubule bundles that are necessary for transport within the elongating axon. Negative regulator of the Wnt signaling pathway. Represses beta-catenin-mediated transcriptional activation by promoting the nuclear exclusion of beta-catenin. This is Leucine zipper putative tumor suppressor 2 from Bos taurus (Bovine).